Reading from the N-terminus, the 629-residue chain is tRNA uridine 5-carboxymethylaminomethyl modification enzyme MnmG (629 aa).

FAD-binding positions include 13–18 (GGGHAG), V125, and S180. Position 273-287 (273-287 (GPRYCPSIEDKVMRF)) interacts with NAD(+). Q370 provides a ligand contact to FAD.

The protein belongs to the MnmG family. As to quaternary structure, homodimer. Heterotetramer of two MnmE and two MnmG subunits. FAD is required as a cofactor.

The protein localises to the cytoplasm. Its function is as follows. NAD-binding protein involved in the addition of a carboxymethylaminomethyl (cmnm) group at the wobble position (U34) of certain tRNAs, forming tRNA-cmnm(5)s(2)U34. The protein is tRNA uridine 5-carboxymethylaminomethyl modification enzyme MnmG of Salmonella paratyphi C (strain RKS4594).